Here is a 172-residue protein sequence, read N- to C-terminus: Protein-export protein SecB (172 aa).

The protein belongs to the SecB family. Homotetramer, a dimer of dimers. One homotetramer interacts with 1 SecA dimer.

Its subcellular location is the cytoplasm. Functionally, one of the proteins required for the normal export of preproteins out of the cell cytoplasm. It is a molecular chaperone that binds to a subset of precursor proteins, maintaining them in a translocation-competent state. It also specifically binds to its receptor SecA. This chain is Protein-export protein SecB, found in Bordetella avium (strain 197N).